The primary structure comprises 134 residues: Large ribosomal subunit protein uL22 (134 aa).

Belongs to the universal ribosomal protein uL22 family. As to quaternary structure, part of the 50S ribosomal subunit.

Its function is as follows. This protein binds specifically to 23S rRNA; its binding is stimulated by other ribosomal proteins, e.g. L4, L17, and L20. It is important during the early stages of 50S assembly. It makes multiple contacts with different domains of the 23S rRNA in the assembled 50S subunit and ribosome. The globular domain of the protein is located near the polypeptide exit tunnel on the outside of the subunit, while an extended beta-hairpin is found that lines the wall of the exit tunnel in the center of the 70S ribosome. In Rhodococcus jostii (strain RHA1), this protein is Large ribosomal subunit protein uL22.